A 318-amino-acid polypeptide reads, in one-letter code: WRKY transcription factor 28 (318 aa).

Composition is skewed to polar residues over residues 74–84 (SSEVFNSSIDQ) and 106–115 (RVSPSNSSSS). The segment at 74–158 (SSEVFNSSID…KTEVKKQREP (85 aa)) is disordered. Composition is skewed to basic and acidic residues over residues 116-126 (EADHPGEDSGK) and 148-158 (KKTEVKKQREP). A DNA-binding region (WRKY) is located at residues 166-231 (SEVDHLEDGY…YEGQHNHPIP (66 aa)).

This sequence belongs to the WRKY group II-c family.

Its subcellular location is the nucleus. Its function is as follows. Transcription factor. Interacts specifically with the W box (5'-(T)TGAC[CT]-3'), a frequently occurring elicitor-responsive cis-acting element. The protein is WRKY transcription factor 28 (WRKY28) of Arabidopsis thaliana (Mouse-ear cress).